The sequence spans 270 residues: Oxidoreductase claK (270 aa).

The protein belongs to the avfA family.

Its pathway is pigment biosynthesis. Oxidoreductase; part of the gene cluster that mediates the biosynthesis of the bianthraquinone cladofulvin, a conidial pigment not required for virulence but that plays a role in fitness and resistance to environmental stresses including UV light and low-temperature stress. The pathway begins with the synthesis of atrochrysone thioester by the polyketide synthase (PKS) claG. The atrochrysone carboxyl ACP thioesterase claF then breaks the thioester bond and releases the atrochrysone carboxylic acid from claG. This compound is decarboxylated by claH to yield emodin, which is further converted to chrysophanol hydroquinone by the reductase claC and the dehydratase claB. The cytochrome monooxygenase P450 claM then catalyzes the dimerization of nataloe-emodin to cladofulvin. This is Oxidoreductase claK from Passalora fulva (Tomato leaf mold).